Here is a 284-residue protein sequence, read N- to C-terminus: Tropomyosin (284 aa).

The disordered stretch occupies residues 1–47 (MDAIKKKMQAMKIEKDNAMDRADAAEEKARQQQERVEKLEEELRDTQ). Positions 1–284 (MDAIKKKMQA…DQTFQELSGY (284 aa)) form a coiled coil. Positions 12-38 (KIEKDNAMDRADAAEEKARQQQERVEK) are enriched in basic and acidic residues.

This sequence belongs to the tropomyosin family. Homodimer.

Its function is as follows. Tropomyosin, in association with the troponin complex, plays a central role in the calcium dependent regulation of muscle contraction. The polypeptide is Tropomyosin (Trichinella pseudospiralis (Parasitic roundworm)).